A 717-amino-acid chain; its full sequence is DNA ligase (717 aa).

NAD(+) is bound by residues 44-48 (DAEYD), 93-94 (SL), and Glu-127. Lys-129 serves as the catalytic N6-AMP-lysine intermediate. NAD(+)-binding residues include Arg-150, Glu-186, Lys-302, and Lys-326. 4 residues coordinate Zn(2+): Cys-431, Cys-434, Cys-455, and Cys-461. The 79-residue stretch at 639 to 717 (TSGSPVVGKT…EDEWLELIGG (79 aa)) folds into the BRCT domain.

The protein belongs to the NAD-dependent DNA ligase family. LigA subfamily. Mg(2+) serves as cofactor. It depends on Mn(2+) as a cofactor.

It catalyses the reaction NAD(+) + (deoxyribonucleotide)n-3'-hydroxyl + 5'-phospho-(deoxyribonucleotide)m = (deoxyribonucleotide)n+m + AMP + beta-nicotinamide D-nucleotide.. DNA ligase that catalyzes the formation of phosphodiester linkages between 5'-phosphoryl and 3'-hydroxyl groups in double-stranded DNA using NAD as a coenzyme and as the energy source for the reaction. It is essential for DNA replication and repair of damaged DNA. In Rhizobium rhizogenes (strain K84 / ATCC BAA-868) (Agrobacterium radiobacter), this protein is DNA ligase.